The following is a 131-amino-acid chain: D-ribose pyranase (131 aa).

The active-site Proton donor is H20. Residues D28, H98, and 120–122 each bind substrate; that span reads YCN.

It belongs to the RbsD / FucU family. RbsD subfamily. Homodecamer.

It localises to the cytoplasm. The catalysed reaction is beta-D-ribopyranose = beta-D-ribofuranose. Its pathway is carbohydrate metabolism; D-ribose degradation; D-ribose 5-phosphate from beta-D-ribopyranose: step 1/2. Its function is as follows. Catalyzes the interconversion of beta-pyran and beta-furan forms of D-ribose. In Coprothermobacter proteolyticus (strain ATCC 35245 / DSM 5265 / OCM 4 / BT), this protein is D-ribose pyranase.